The sequence spans 410 residues: Probable 2,3-bisphosphoglycerate-independent phosphoglycerate mutase (410 aa).

It belongs to the BPG-independent phosphoglycerate mutase family. A-PGAM subfamily.

The enzyme catalyses (2R)-2-phosphoglycerate = (2R)-3-phosphoglycerate. It functions in the pathway carbohydrate degradation; glycolysis; pyruvate from D-glyceraldehyde 3-phosphate: step 3/5. Catalyzes the interconversion of 2-phosphoglycerate and 3-phosphoglycerate. In Deinococcus radiodurans (strain ATCC 13939 / DSM 20539 / JCM 16871 / CCUG 27074 / LMG 4051 / NBRC 15346 / NCIMB 9279 / VKM B-1422 / R1), this protein is Probable 2,3-bisphosphoglycerate-independent phosphoglycerate mutase.